Here is a 137-residue protein sequence, read N- to C-terminus: Protein Turandot X (137 aa).

The first 24 residues, 1–24 (MRVPVFQLSCLLGLIVCLLCSVKA), serve as a signal peptide directing secretion.

It belongs to the Turandot family.

The protein localises to the secreted. Its function is as follows. A humoral factor that may play a role in stress tolerance. The chain is Protein Turandot X from Drosophila pseudoobscura pseudoobscura (Fruit fly).